Consider the following 192-residue polypeptide: Neurogenic differentiation factor 1 (192 aa).

Residues 19 to 71 (VRRVKANGRERARMHGLNNALDMLREYIPITTQHQKLSKIETLRLARNYIDAL) enclose the bHLH domain. Positions 116–192 (PSQFDIFSDP…SHQNTFNYSP (77 aa)) are disordered. The span at 139–163 (SSFSSSSPSSSCSPPQYYYSPTQPS) shows a compositional bias: low complexity.

As to expression, expressed in neuroblasts of the AB lineage. More specifically in precursors of the embryonic ventral cord motor neurons. Expressed to a lesser degree in the EMS lineage which generates mostly endoderm and mesoderm tissues.

The protein localises to the nucleus. Its function is as follows. Acts as a transcriptional regulator whose activity is required for several aspects of motor neuron fate specification, including cell division patterns, proper spatiotemporal expression of fate-specific markers, and normal axonal morphology and pathfinding. Involved in regulating glial specification. The polypeptide is Neurogenic differentiation factor 1 (cnd-1) (Caenorhabditis elegans).